We begin with the raw amino-acid sequence, 2894 residues long: uncharacterized protein (2894 aa).

Residues 8–28 (ISIFVFTILLLSNVSLGLNVS) form a helical membrane-spanning segment. PbH1 repeat units lie at residues 543 to 567 (EVRW…DISL), 2085 to 2107 (NYPL…SMLN), 2135 to 2156 (FGNI…VLYK), 2158 to 2180 (GNGI…YSKN), 2201 to 2223 (ISSI…LLEN), 2224 to 2244 (SSSS…YLKE), 2245 to 2266 (NYIS…EIVN), 2267 to 2289 (SSNV…AIFN), 2290 to 2311 (GENV…LSYG), 2341 to 2363 (LNNL…FIYS), 2367 to 2389 (ASNV…YIYG), 2390 to 2419 (VNAI…KISG), 2422 to 2444 (TKGV…SLEG), 2455 to 2477 (VENN…YIGG), 2479 to 2501 (VENV…LIQE), 2512 to 2542 (GTNI…TVGA), 2550 to 2582 (NGYI…EVYG), 2589 to 2611 (SLEF…LIGA), 2612 to 2633 (SKDI…TIPN), and 2638 to 2660 (PYNI…DLDD).

It is found in the membrane. This is an uncharacterized protein from Methanocaldococcus jannaschii (strain ATCC 43067 / DSM 2661 / JAL-1 / JCM 10045 / NBRC 100440) (Methanococcus jannaschii).